Consider the following 80-residue polypeptide: U-scoloptoxin(15)-Er1a (80 aa).

An N-terminal signal peptide occupies residues 1–22; the sequence is MQNKGVVLTLFLVVSMAIVISS.

The protein belongs to the scoloptoxin-15 family. In terms of processing, contains 2 disulfide bonds. As to expression, expressed by the venom gland.

Its subcellular location is the secreted. This chain is U-scoloptoxin(15)-Er1a, found in Ethmostigmus rubripes (Giant centipede).